The chain runs to 352 residues: Nicotinate-nucleotide--dimethylbenzimidazole phosphoribosyltransferase (352 aa).

Glutamate 316 serves as the catalytic Proton acceptor.

It belongs to the CobT family.

It catalyses the reaction 5,6-dimethylbenzimidazole + nicotinate beta-D-ribonucleotide = alpha-ribazole 5'-phosphate + nicotinate + H(+). Its pathway is nucleoside biosynthesis; alpha-ribazole biosynthesis; alpha-ribazole from 5,6-dimethylbenzimidazole: step 1/2. Functionally, catalyzes the synthesis of alpha-ribazole-5'-phosphate from nicotinate mononucleotide (NAMN) and 5,6-dimethylbenzimidazole (DMB). The protein is Nicotinate-nucleotide--dimethylbenzimidazole phosphoribosyltransferase of Clostridium acetobutylicum (strain ATCC 824 / DSM 792 / JCM 1419 / IAM 19013 / LMG 5710 / NBRC 13948 / NRRL B-527 / VKM B-1787 / 2291 / W).